A 72-amino-acid chain; its full sequence is Translation initiation factor IF-1 (72 aa).

The region spanning 1-72 (MAKEDCIEME…TKGRIKFRSK (72 aa)) is the S1-like domain.

This sequence belongs to the IF-1 family. As to quaternary structure, component of the 30S ribosomal translation pre-initiation complex which assembles on the 30S ribosome in the order IF-2 and IF-3, IF-1 and N-formylmethionyl-tRNA(fMet); mRNA recruitment can occur at any time during PIC assembly.

It localises to the cytoplasm. One of the essential components for the initiation of protein synthesis. Stabilizes the binding of IF-2 and IF-3 on the 30S subunit to which N-formylmethionyl-tRNA(fMet) subsequently binds. Helps modulate mRNA selection, yielding the 30S pre-initiation complex (PIC). Upon addition of the 50S ribosomal subunit IF-1, IF-2 and IF-3 are released leaving the mature 70S translation initiation complex. The sequence is that of Translation initiation factor IF-1 from Francisella tularensis subsp. novicida (strain U112).